Here is a 119-residue protein sequence, read N- to C-terminus: MNARGALGRYGEDLAARLLAEAGMAVIERNWRCRAGEIDIVARDGDALVFCEVKTRRSPGFEHPMAAVGPVKADRLRRLAEIWLDRHGGPPPGGVRIDLVGVLVPRRGAPVTEHARGVS.

It belongs to the UPF0102 family.

This chain is UPF0102 protein SGR_1878, found in Streptomyces griseus subsp. griseus (strain JCM 4626 / CBS 651.72 / NBRC 13350 / KCC S-0626 / ISP 5235).